Here is a 278-residue protein sequence, read N- to C-terminus: 4-deoxy-L-threo-5-hexosulose-uronate ketol-isomerase (278 aa).

Residues His-196, His-198, Glu-203, and His-245 each contribute to the Zn(2+) site.

Belongs to the KduI family. The cofactor is Zn(2+).

The catalysed reaction is 5-dehydro-4-deoxy-D-glucuronate = 3-deoxy-D-glycero-2,5-hexodiulosonate. Its pathway is glycan metabolism; pectin degradation; 2-dehydro-3-deoxy-D-gluconate from pectin: step 4/5. Functionally, catalyzes the isomerization of 5-dehydro-4-deoxy-D-glucuronate to 3-deoxy-D-glycero-2,5-hexodiulosonate. This chain is 4-deoxy-L-threo-5-hexosulose-uronate ketol-isomerase, found in Enterobacter sp. (strain 638).